A 514-amino-acid polypeptide reads, in one-letter code: Serine/threonine protein phosphatase PstP (514 aa).

The Cytoplasmic portion of the chain corresponds to 1-302; that stretch reads MARVTLVLRY…RPRWSGRRLA (302 aa). Residues 9–238 enclose the PPM-type phosphatase domain; the sequence is RYAARSDRGL…DNVTVVVADV (230 aa). Residues Asp38, Gly39, Asp118, Ser160, Asp191, and Asp229 each coordinate Mn(2+). A helical membrane pass occupies residues 303-323; the sequence is FVVALVTVLMTAGLLIGRAII. Residues 324 to 514 are Extracellular-facing; it reads RSNYYVADYA…QPGIDCRAAA (191 aa). The interval 420–514 is disordered; that stretch reads LLPPCPAPRA…QPGIDCRAAA (95 aa). Low complexity predominate over residues 440–480; the sequence is TTSETTEPNVTSSPASPSPTTSASAPTGTTPAIPTSASPAA.

Requires Mn(2+) as cofactor.

The protein localises to the cell membrane. It carries out the reaction O-phospho-L-seryl-[protein] + H2O = L-seryl-[protein] + phosphate. It catalyses the reaction O-phospho-L-threonyl-[protein] + H2O = L-threonyl-[protein] + phosphate. Functionally, plays an important role in regulating cell division and growth by reversible phosphorylation signaling. May play important roles in regulating cellular metabolism and signaling pathways, which could mediate the growth and development of the cell. Plays a role in establishing and maintaining infection. The chain is Serine/threonine protein phosphatase PstP (pstP) from Mycobacterium tuberculosis (strain CDC 1551 / Oshkosh).